A 200-amino-acid chain; its full sequence is ATP synthase subunit s, mitochondrial (200 aa).

The transit peptide at 1–25 (MMLFGKISQQLCGLKKLPWSRDSRY) directs the protein to the mitochondrion. The interval 1 to 61 (MMLFGKISQQ…SEWLLRCGAM (61 aa)) is N-terminal domain. Glycine 59 is a Mg(2+) binding site. LRR repeat units follow at residues 62–87 (VRYHGQQRWQKDYNHLPTGPLDKYKI), 88–116 (QAIDATDSCIMSIGFDHMEGLQYVEKIRL), 117–141 (CKCHYIEDGCLERLSQLENLQKSML), and 142–173 (EMEIISCGNVTDKGIIALHHFRNLKYLFLSDL). Threonine 93 serves as a coordination point for Mg(2+).

Belongs to the ATP synthase subunit s family. In terms of assembly, homotetramer. Associates with ATP synthase.

Its subcellular location is the mitochondrion. The protein localises to the mitochondrion inner membrane. In terms of biological role, involved in regulation of mitochondrial membrane ATP synthase. Necessary for H(+) conduction of ATP synthase. Facilitates energy-driven catalysis of ATP synthesis by blocking a proton leak through an alternative proton exit pathway. The chain is ATP synthase subunit s, mitochondrial (DMAC2L) from Bos taurus (Bovine).